The chain runs to 223 residues: ATP-dependent dethiobiotin synthetase BioD (223 aa).

Residue 12-17 participates in ATP binding; it reads EIGKTH. Residue T16 participates in Mg(2+) binding. K37 is an active-site residue. A substrate-binding site is contributed by S41. Residues D52 and 118-121 each bind ATP; that span reads EGVG. The Mg(2+) site is built by D52 and E118.

Belongs to the dethiobiotin synthetase family. In terms of assembly, homodimer. Requires Mg(2+) as cofactor.

Its subcellular location is the cytoplasm. The catalysed reaction is (7R,8S)-7,8-diammoniononanoate + CO2 + ATP = (4R,5S)-dethiobiotin + ADP + phosphate + 3 H(+). The protein operates within cofactor biosynthesis; biotin biosynthesis; biotin from 7,8-diaminononanoate: step 1/2. In terms of biological role, catalyzes a mechanistically unusual reaction, the ATP-dependent insertion of CO2 between the N7 and N8 nitrogen atoms of 7,8-diaminopelargonic acid (DAPA, also called 7,8-diammoniononanoate) to form a ureido ring. The chain is ATP-dependent dethiobiotin synthetase BioD from Acidiphilium cryptum (strain JF-5).